Here is a 188-residue protein sequence, read N- to C-terminus: Pyridoxal 5'-phosphate synthase subunit PdxT (188 aa).

Residue 47-49 participates in L-glutamine binding; that stretch reads GES. Catalysis depends on Cys79, which acts as the Nucleophile. Residues Arg105 and 134-135 contribute to the L-glutamine site; that span reads IR. Residues His170 and Glu172 each act as charge relay system in the active site.

This sequence belongs to the glutaminase PdxT/SNO family. As to quaternary structure, in the presence of PdxS, forms a dodecamer of heterodimers. Only shows activity in the heterodimer.

It carries out the reaction aldehydo-D-ribose 5-phosphate + D-glyceraldehyde 3-phosphate + L-glutamine = pyridoxal 5'-phosphate + L-glutamate + phosphate + 3 H2O + H(+). It catalyses the reaction L-glutamine + H2O = L-glutamate + NH4(+). It participates in cofactor biosynthesis; pyridoxal 5'-phosphate biosynthesis. Its function is as follows. Catalyzes the hydrolysis of glutamine to glutamate and ammonia as part of the biosynthesis of pyridoxal 5'-phosphate. The resulting ammonia molecule is channeled to the active site of PdxS. In Listeria welshimeri serovar 6b (strain ATCC 35897 / DSM 20650 / CCUG 15529 / CIP 8149 / NCTC 11857 / SLCC 5334 / V8), this protein is Pyridoxal 5'-phosphate synthase subunit PdxT.